A 283-amino-acid polypeptide reads, in one-letter code: Flagellar filament 35 kDa core protein (283 aa).

It belongs to the bacterial flagellin family. As to quaternary structure, the flagellum consists of two outer layers around a core that contains several antigenically related polypeptides.

The protein resides in the periplasmic flagellum. The protein localises to the periplasm. In terms of biological role, component of the core of the flagella. The sequence is that of Flagellar filament 35 kDa core protein (flaB) from Leptospira interrogans serogroup Icterohaemorrhagiae serovar Lai (strain 56601).